The sequence spans 387 residues: tRNA pseudouridine synthase B (387 aa).

The Nucleophile role is filled by Asp-43.

It belongs to the pseudouridine synthase TruB family. Type 1 subfamily.

The catalysed reaction is uridine(55) in tRNA = pseudouridine(55) in tRNA. Its function is as follows. Responsible for synthesis of pseudouridine from uracil-55 in the psi GC loop of transfer RNAs. The polypeptide is tRNA pseudouridine synthase B (Bifidobacterium longum (strain NCC 2705)).